Reading from the N-terminus, the 600-residue chain is Chaperone protein DnaK (600 aa).

Threonine 175 bears the Phosphothreonine; by autocatalysis mark. A disordered region spans residues 572–600 (FAQQTQQQDPNNQKDDVTEATVTDDSTKK). Positions 591–600 (ATVTDDSTKK) are enriched in polar residues.

This sequence belongs to the heat shock protein 70 family.

Functionally, acts as a chaperone. This Ureaplasma urealyticum serovar 10 (strain ATCC 33699 / Western) protein is Chaperone protein DnaK.